Consider the following 468-residue polypeptide: Fibrinogen beta chain (468 aa).

At Gln1 the chain carries Pyrrolidone carboxylic acid. Residues 1–10 are compositionally biased toward acidic residues; the sequence is QFPTDYDEGQ. The interval 1–54 is disordered; it reads QFPTDYDEGQDDRPKVGLGARGHRPYDKKKEEAPSLRPVPPPISGGGYRARPAT. The O-linked (GalNAc...) threonine glycan is linked to Thr4. Tyr6 is modified (sulfotyrosine). Over residues 24 to 34 the composition is skewed to basic and acidic residues; sequence RPYDKKKEEAP. Residues 88-204 are a coiled coil; the sequence is KLQDTLVRQE…TQMEYCRTPC (117 aa). 2 disulfide bridges follow: Cys208–Cys293 and Cys218–Cys247. One can recognise a Fibrinogen C-terminal domain in the interval 209-465; it reads NIPVVSGKEC…KMSMKIRPYF (257 aa). Asn371 carries N-linked (GlcNAc...) asparagine glycosylation. Cys401 and Cys414 form a disulfide bridge.

Heterohexamer; disulfide linked. Contains 2 sets of 3 non-identical chains (alpha, beta and gamma). The 2 heterotrimers are in head to head conformation with the N-termini in a small central domain. Post-translationally, conversion of fibrinogen to fibrin is triggered by thrombin, which cleaves fibrinopeptides A and B from alpha and beta chains, and thus exposes the N-terminal polymerization sites responsible for the formation of the soft clot. The soft clot is converted into the hard clot by factor XIIIA which catalyzes the epsilon-(gamma-glutamyl)lysine cross-linking between gamma chains (stronger) and between alpha chains (weaker) of different monomers. As to expression, detected in blood plasma (at protein level).

The protein localises to the secreted. In terms of biological role, cleaved by the protease thrombin to yield monomers which, together with fibrinogen alpha (FGA) and fibrinogen gamma (FGG), polymerize to form an insoluble fibrin matrix. Fibrin has a major function in hemostasis as one of the primary components of blood clots. In addition, functions during the early stages of wound repair to stabilize the lesion and guide cell migration during re-epithelialization. Was originally thought to be essential for platelet aggregation, based on in vitro studies using anticoagulated blood. However subsequent studies have shown that it is not absolutely required for thrombus formation in vivo. Enhances expression of SELP in activated platelets. Maternal fibrinogen is essential for successful pregnancy. Fibrin deposition is also associated with infection, where it protects against IFNG-mediated hemorrhage. May also facilitate the antibacterial immune response via both innate and T-cell mediated pathways. This Bos taurus (Bovine) protein is Fibrinogen beta chain (FGB).